Here is a 452-residue protein sequence, read N- to C-terminus: MSRDTIVAQATPIGRGGVGILRVSGPLAQQVAEQVLGKTLTPRMANYLPFKDSDGTVLDQGIALYFKAPNSFTGEDVLELQGHGGQIVMDLLLKRILQIDGIRLARPGEFSEQAFLNDKLDLAQAEAIADLIEASSEQAARSALKSLQGEFSNKINELVDSVIYLRTYVEAAIDFPDEEIDFLADGKIETHLREIIAKLAKVKNEAKQGAILREGMKVVIAGRPNAGKSSLLNTLAGREAAIVTDIAGTTRDVLREHIHIDGMPLHIIDTAGLRDATDEVEKIGIRRAWDEIEQADRILLILDSTENQVELDLVQSEFMAKLPPHIPLTIVRNKADLSGEAEVLDEQNGLAVISLSAKTQKGVDLLRQHLKQSMGYQVCTEGGFLARRRHLEALEQADIHLQAGLIQLTEFYAGELVAEELRIAQHHLSEITGQFTSDDLLGNIFSSFCIGK.

Residues Arg-22, Glu-79, and Lys-119 each contribute to the (6S)-5-formyl-5,6,7,8-tetrahydrofolate site. One can recognise a TrmE-type G domain in the interval 215-375; that stretch reads GMKVVIAGRP…LRQHLKQSMG (161 aa). Asn-225 contributes to the K(+) binding site. GTP contacts are provided by residues 225–230, 244–250, 269–272, and 333–336; these read NAGKSS, TDIAGTT, DTAG, and NKAD. Ser-229 provides a ligand contact to Mg(2+). Thr-244, Ile-246, and Thr-249 together coordinate K(+). Thr-250 serves as a coordination point for Mg(2+). Lys-452 contacts (6S)-5-formyl-5,6,7,8-tetrahydrofolate.

The protein belongs to the TRAFAC class TrmE-Era-EngA-EngB-Septin-like GTPase superfamily. TrmE GTPase family. Homodimer. Heterotetramer of two MnmE and two MnmG subunits. The cofactor is K(+).

The protein resides in the cytoplasm. In terms of biological role, exhibits a very high intrinsic GTPase hydrolysis rate. Involved in the addition of a carboxymethylaminomethyl (cmnm) group at the wobble position (U34) of certain tRNAs, forming tRNA-cmnm(5)s(2)U34. In Histophilus somni (strain 129Pt) (Haemophilus somnus), this protein is tRNA modification GTPase MnmE.